The following is a 164-amino-acid chain: Putative 4-hydroxy-4-methyl-2-oxoglutarate aldolase (164 aa).

Substrate-binding positions include 75-78 (GDLI) and arginine 97. Aspartate 98 contributes to the a divalent metal cation binding site.

It belongs to the class II aldolase/RraA-like family. Homotrimer. A divalent metal cation serves as cofactor.

The enzyme catalyses 4-hydroxy-4-methyl-2-oxoglutarate = 2 pyruvate. It catalyses the reaction oxaloacetate + H(+) = pyruvate + CO2. Functionally, catalyzes the aldol cleavage of 4-hydroxy-4-methyl-2-oxoglutarate (HMG) into 2 molecules of pyruvate. Also contains a secondary oxaloacetate (OAA) decarboxylase activity due to the common pyruvate enolate transition state formed following C-C bond cleavage in the retro-aldol and decarboxylation reactions. This Shewanella oneidensis (strain ATCC 700550 / JCM 31522 / CIP 106686 / LMG 19005 / NCIMB 14063 / MR-1) protein is Putative 4-hydroxy-4-methyl-2-oxoglutarate aldolase.